The following is a 354-amino-acid chain: Probable mannitol dehydrogenase 1 (354 aa).

Residues cysteine 43, histidine 65, cysteine 96, cysteine 99, cysteine 102, cysteine 110, and cysteine 158 each coordinate Zn(2+).

Belongs to the zinc-containing alcohol dehydrogenase family. It depends on Zn(2+) as a cofactor.

It carries out the reaction D-mannitol + NAD(+) = D-mannose + NADH + H(+). Its function is as follows. Oxidizes mannitol to mannose. Provides the initial step by which translocated mannitol is committed to central metabolism and, by regulating mannitol pool size, is important in regulating salt tolerance at the cellular level. The chain is Probable mannitol dehydrogenase 1 (CAD1) from Stylosanthes humilis (Townsville stylo).